Here is a 491-residue protein sequence, read N- to C-terminus: Aspartyl/glutamyl-tRNA(Asn/Gln) amidotransferase subunit B (491 aa).

This sequence belongs to the GatB/GatE family. GatB subfamily. Heterotrimer of A, B and C subunits.

It carries out the reaction L-glutamyl-tRNA(Gln) + L-glutamine + ATP + H2O = L-glutaminyl-tRNA(Gln) + L-glutamate + ADP + phosphate + H(+). It catalyses the reaction L-aspartyl-tRNA(Asn) + L-glutamine + ATP + H2O = L-asparaginyl-tRNA(Asn) + L-glutamate + ADP + phosphate + 2 H(+). In terms of biological role, allows the formation of correctly charged Asn-tRNA(Asn) or Gln-tRNA(Gln) through the transamidation of misacylated Asp-tRNA(Asn) or Glu-tRNA(Gln) in organisms which lack either or both of asparaginyl-tRNA or glutaminyl-tRNA synthetases. The reaction takes place in the presence of glutamine and ATP through an activated phospho-Asp-tRNA(Asn) or phospho-Glu-tRNA(Gln). In Paraburkholderia xenovorans (strain LB400), this protein is Aspartyl/glutamyl-tRNA(Asn/Gln) amidotransferase subunit B.